The chain runs to 59 residues: Large ribosomal subunit protein bL32 (59 aa).

The segment at 1–22 (MAVQQNKKSPSKRGMHRSHDFL) is disordered.

This sequence belongs to the bacterial ribosomal protein bL32 family.

The polypeptide is Large ribosomal subunit protein bL32 (Thiobacillus denitrificans (strain ATCC 25259 / T1)).